Consider the following 685-residue polypeptide: Glycine--tRNA ligase beta subunit (685 aa).

A disordered region spans residues 58 to 77 (GLTAQSPTTREERKGPRTDA). Over residues 66 to 77 (TREERKGPRTDA) the composition is skewed to basic and acidic residues.

The protein belongs to the class-II aminoacyl-tRNA synthetase family. Tetramer of two alpha and two beta subunits.

The protein resides in the cytoplasm. It carries out the reaction tRNA(Gly) + glycine + ATP = glycyl-tRNA(Gly) + AMP + diphosphate. The protein is Glycine--tRNA ligase beta subunit of Paracoccus denitrificans (strain Pd 1222).